Reading from the N-terminus, the 607-residue chain is Matrix metalloproteinase-16 (607 aa).

The first 31 residues, 1–31, serve as a signal peptide directing secretion; it reads MILLAFSSGRRLDFVHRSGVFFLQTLLWILC. The propeptide occupies 32–119; the sequence is ATVCGTEQYF…SSKFNIRRKR (88 aa). Asn-83 is a glycosylation site (N-linked (GlcNAc...) asparagine). The short motif at 99–106 is the Cysteine switch element; that stretch reads PRCGVPDQ. Cys-101 provides a ligand contact to Zn(2+). Residues 120–564 are Extracellular-facing; the sequence is YALTGQKWQH…LDNTASTVKA (445 aa). Asp-183 lines the Ca(2+) pocket. Zn(2+)-binding residues include His-193 and Asp-195. Ca(2+) is bound by residues Asp-200, Gly-201, Gly-203, and Phe-205. Position 208 (His-208) interacts with Zn(2+). Residues Gly-215, Gly-217, and Asp-219 each contribute to the Ca(2+) site. His-221 contacts Zn(2+). Ca(2+)-binding residues include Asp-223 and Glu-226. His-246 is a Zn(2+) binding site. The active site involves Glu-247. Residues His-250 and His-256 each coordinate Zn(2+). Positions 281–340 are disordered; it reads DDLQGIQKIYGPPDKIPPPTRPLPTVPPHRSVPPADPRRHDRPKPPRPPTGRPSYPGAKP. Pro residues predominate over residues 294–315; that stretch reads DKIPPPTRPLPTVPPHRSVPPA. 4 Hemopexin repeats span residues 340–388, 389–434, 436–484, and 485–532; these read PNIC…WRGL, PPSI…GNGI, PHGI…KGIP, and ESPQ…FMGC. A disulfide bridge links Cys-343 with Cys-532. A helical membrane pass occupies residues 565–585; the sequence is IAIVIPCILALCLLVLVYTVF. The Cytoplasmic portion of the chain corresponds to 586 to 607; it reads QFKRKGTPRHILYCKRSMQEWV.

The protein belongs to the peptidase M10A family. As to quaternary structure, interacts with CSPG4 through CSPG4 chondroitin sulfate glycosaminoglycan. It depends on Zn(2+) as a cofactor. The cofactor is Ca(2+). Post-translationally, the precursor is cleaved by a furin endopeptidase.

It is found in the cell membrane. Endopeptidase that degrades various components of the extracellular matrix, such as collagen type III and fibronectin. Activates progelatinase A. Involved in the matrix remodeling of blood vessels. It has no effect on type I, II, IV and V collagen. However, upon interaction with CSPG4, it may be involved in degradation and invasion of type I collagen by melanoma cells. The sequence is that of Matrix metalloproteinase-16 (Mmp16) from Mus musculus (Mouse).